The following is an 89-amino-acid chain: Small ribosomal subunit protein uS15 (89 aa).

It belongs to the universal ribosomal protein uS15 family. In terms of assembly, part of the 30S ribosomal subunit. Forms a bridge to the 50S subunit in the 70S ribosome, contacting the 23S rRNA.

Its function is as follows. One of the primary rRNA binding proteins, it binds directly to 16S rRNA where it helps nucleate assembly of the platform of the 30S subunit by binding and bridging several RNA helices of the 16S rRNA. In terms of biological role, forms an intersubunit bridge (bridge B4) with the 23S rRNA of the 50S subunit in the ribosome. The polypeptide is Small ribosomal subunit protein uS15 (Geobacillus thermodenitrificans (strain NG80-2)).